Consider the following 294-residue polypeptide: Glutamate-binding protein GluB (294 aa).

The N-terminal stretch at 1-26 is a signal peptide; it reads MSHKRMFTRLAAATSAAVLAGITLTA. C27 carries the N-palmitoyl cysteine lipid modification. C27 carries the S-diacylglycerol cysteine lipid modification.

It belongs to the bacterial solute-binding protein 3 family. As to quaternary structure, the complex is composed of two ATP-binding proteins (GluA), two transmembrane proteins (GluC and GluD) and a solute-binding protein (GluB).

Its subcellular location is the cell membrane. Part of the ABC transporter complex GluABCD involved in glutamate uptake. Binds glutamate with a high affinity. This chain is Glutamate-binding protein GluB, found in Corynebacterium efficiens (strain DSM 44549 / YS-314 / AJ 12310 / JCM 11189 / NBRC 100395).